The sequence spans 224 residues: COMM domain-containing protein 5 (224 aa).

Serine 2 carries the post-translational modification N-acetylserine. The COMM domain occupies histidine 151 to glutamate 215.

This sequence belongs to the COMM domain-containing protein 5 family. In terms of assembly, component of the commander complex consisting of the CCC subcomplex and the retriever subcomplex. Component of the CCC (COMMD/CCDC22/CCDC93) subcomplex consisting of COMMD1, COMMD2, COMMD3, COMMD4, COMMD5, COMMD6, COMMD7, COMMD8, COMMD9, COMMD10, CCDC22 and CCDC93; within the complex forms a heterodimer with COMMD10. Interacts (via COMM domain) with COMMD1 (via COMM domain). Interacts with RELA, RELB, NFKB1/p105. Interacts with CCDC22, CCDC93, SCNN1B, CUL2, CUL3, CUL4A, CUL4B, CUL7.

The protein localises to the nucleus. It is found in the cytoplasm. Functionally, scaffold protein in the commander complex that is essential for endosomal recycling of transmembrane cargos; the commander complex is composed of the CCC subcomplex and the retriever subcomplex. May modulate activity of cullin-RING E3 ubiquitin ligase (CRL) complexes. Negatively regulates cell proliferation. Negatively regulates cell cycle G2/M phase transition probably by transactivating p21/CDKN1A through the p53/TP53-independent signaling pathway. Involved in kidney proximal tubule morphogenesis. Down-regulates activation of NF-kappa-B. The chain is COMM domain-containing protein 5 (COMMD5) from Bos taurus (Bovine).